The chain runs to 427 residues: MSVSFENKETNRGVLTFTISQDQIKPELDRVFKSVKKSLNVPGFRKGHLPRPIFDKKFGEESLYQDVMNALLPNAYEAAVKEAGLEVVAQPKIDVTSMEKGQDWVIAAEVVTKPEVKLGDYKNLEVSVDVEKEVTDADVEERIERERNNLAELVIKEAAAEDGDTVVIDFVGSIDGVEFDGGKGENFSLGLGSGQFIPGFEDQLVGHSAGETVDVIVTFPEDYQAEDLAGKEAKFVTTIHEVKAKEVPALDDELAKDIDEEVETLADLKEKYRKELAAAKEEAYKDAVEGAAIDTAVENAEIVELPEEMIHEEVHRSVNEFLGNLQRQGINPDMYFQITGTTQEDLHNQYQAEAESRTKTNLVIEAVAKAEGFDASEEEIQKEVEQLAADYNMEVAQVQNLLSADMLKHDITIKKAVELITSTATVK.

Residues 163 to 248 (GDTVVIDFVG…IHEVKAKEVP (86 aa)) enclose the PPIase FKBP-type domain.

The protein belongs to the FKBP-type PPIase family. Tig subfamily.

The protein resides in the cytoplasm. The enzyme catalyses [protein]-peptidylproline (omega=180) = [protein]-peptidylproline (omega=0). Functionally, involved in protein export. Acts as a chaperone by maintaining the newly synthesized protein in an open conformation. Functions as a peptidyl-prolyl cis-trans isomerase. The chain is Trigger factor from Streptococcus pneumoniae (strain Taiwan19F-14).